Here is a 328-residue protein sequence, read N- to C-terminus: Glucokinase (328 aa).

16–21 (ADIGGT) provides a ligand contact to ATP.

This sequence belongs to the bacterial glucokinase family.

It is found in the cytoplasm. It catalyses the reaction D-glucose + ATP = D-glucose 6-phosphate + ADP + H(+). The sequence is that of Glucokinase from Neisseria gonorrhoeae (strain ATCC 700825 / FA 1090).